Here is a 433-residue protein sequence, read N- to C-terminus: MEYKVEDVSPVKKKVNVTVPVEEVDAALGAAIAMYRTSVNLDGFRKGKVPASIVENRFRKEIYAEATQDLVNVHINEIVTSLAVSPLSRIDFDGGELERGKEFSYTISFEVMPQFDLPDYEGFAVEQEKAVVDEKEVDEVIARIRRNMAELVPVAETRPGADGDVVVLDFAAFENGEPIEGVSAENFQLSLGEKQSLEDFENLVKTIPAGQEAEGPITFPDDFLNPDFAGKTVTMKVKVHAVKERRLPEIDDALAQKAGGFESMEKMRETVVTSYMQSREQLHKATAQKSMLDKLLKMVDFALPESMVDMYVGNLIEDMRVKMERQGRGLESLGKTPEQLREQVLPEAQQIARSQIFLLAAGRKEAVEVSEQEVDGQLQQLAMRSGQDFDTLKDYYVRNGLIFNLRDRLIADKAMDAIYAKANVTMVDPAPAA.

The PPIase FKBP-type domain maps to 163–248; sequence GDVVVLDFAA…VHAVKERRLP (86 aa).

The protein belongs to the FKBP-type PPIase family. Tig subfamily.

It is found in the cytoplasm. The catalysed reaction is [protein]-peptidylproline (omega=180) = [protein]-peptidylproline (omega=0). Functionally, involved in protein export. Acts as a chaperone by maintaining the newly synthesized protein in an open conformation. Functions as a peptidyl-prolyl cis-trans isomerase. In Nitratidesulfovibrio vulgaris (strain ATCC 29579 / DSM 644 / CCUG 34227 / NCIMB 8303 / VKM B-1760 / Hildenborough) (Desulfovibrio vulgaris), this protein is Trigger factor.